The following is a 115-amino-acid chain: Large ribosomal subunit protein uL22 (115 aa).

Belongs to the universal ribosomal protein uL22 family. Part of the 50S ribosomal subunit.

Functionally, this protein binds specifically to 23S rRNA; its binding is stimulated by other ribosomal proteins, e.g. L4, L17, and L20. It is important during the early stages of 50S assembly. It makes multiple contacts with different domains of the 23S rRNA in the assembled 50S subunit and ribosome. In terms of biological role, the globular domain of the protein is located near the polypeptide exit tunnel on the outside of the subunit, while an extended beta-hairpin is found that lines the wall of the exit tunnel in the center of the 70S ribosome. This Limosilactobacillus fermentum (strain NBRC 3956 / LMG 18251) (Lactobacillus fermentum) protein is Large ribosomal subunit protein uL22.